We begin with the raw amino-acid sequence, 389 residues long: S-adenosylmethionine synthase (389 aa).

His-17 serves as a coordination point for ATP. Mg(2+) is bound at residue Asp-19. Glu-45 is a binding site for K(+). L-methionine contacts are provided by Glu-58 and Gln-101. Positions Gln-101–Gly-111 are flexible loop. ATP is bound by residues Asp-170 to Lys-172, Arg-237 to Phe-238, Asp-246, Arg-252 to Lys-253, Ala-269, and Lys-273. Asp-246 contacts L-methionine. Lys-277 provides a ligand contact to L-methionine.

Belongs to the AdoMet synthase family. As to quaternary structure, homotetramer; dimer of dimers. It depends on Mg(2+) as a cofactor. The cofactor is K(+).

It localises to the cytoplasm. It carries out the reaction L-methionine + ATP + H2O = S-adenosyl-L-methionine + phosphate + diphosphate. The protein operates within amino-acid biosynthesis; S-adenosyl-L-methionine biosynthesis; S-adenosyl-L-methionine from L-methionine: step 1/1. Functionally, catalyzes the formation of S-adenosylmethionine (AdoMet) from methionine and ATP. The overall synthetic reaction is composed of two sequential steps, AdoMet formation and the subsequent tripolyphosphate hydrolysis which occurs prior to release of AdoMet from the enzyme. This Treponema denticola (strain ATCC 35405 / DSM 14222 / CIP 103919 / JCM 8153 / KCTC 15104) protein is S-adenosylmethionine synthase.